The chain runs to 738 residues: Phosphoribosylformylglycinamidine synthase subunit PurL (738 aa).

His53 is a catalytic residue. ATP is bound by residues Tyr56 and Lys95. A Mg(2+)-binding site is contributed by Glu97. Residues 98-101 (SHNH) and Arg120 each bind substrate. The active-site Proton acceptor is His99. Residue Asp121 coordinates Mg(2+). Gln244 contributes to the substrate binding site. Asp274 contributes to the Mg(2+) binding site. 318–320 (ESQ) lines the substrate pocket. Residues Asp499 and Gly536 each coordinate ATP. A Mg(2+)-binding site is contributed by Asn537. Ser539 contacts substrate.

The protein belongs to the FGAMS family. As to quaternary structure, monomer. Part of the FGAM synthase complex composed of 1 PurL, 1 PurQ and 2 PurS subunits.

The protein localises to the cytoplasm. It catalyses the reaction N(2)-formyl-N(1)-(5-phospho-beta-D-ribosyl)glycinamide + L-glutamine + ATP + H2O = 2-formamido-N(1)-(5-O-phospho-beta-D-ribosyl)acetamidine + L-glutamate + ADP + phosphate + H(+). The protein operates within purine metabolism; IMP biosynthesis via de novo pathway; 5-amino-1-(5-phospho-D-ribosyl)imidazole from N(2)-formyl-N(1)-(5-phospho-D-ribosyl)glycinamide: step 1/2. In terms of biological role, part of the phosphoribosylformylglycinamidine synthase complex involved in the purines biosynthetic pathway. Catalyzes the ATP-dependent conversion of formylglycinamide ribonucleotide (FGAR) and glutamine to yield formylglycinamidine ribonucleotide (FGAM) and glutamate. The FGAM synthase complex is composed of three subunits. PurQ produces an ammonia molecule by converting glutamine to glutamate. PurL transfers the ammonia molecule to FGAR to form FGAM in an ATP-dependent manner. PurS interacts with PurQ and PurL and is thought to assist in the transfer of the ammonia molecule from PurQ to PurL. The protein is Phosphoribosylformylglycinamidine synthase subunit PurL of Lacticaseibacillus paracasei (strain ATCC 334 / BCRC 17002 / CCUG 31169 / CIP 107868 / KCTC 3260 / NRRL B-441) (Lactobacillus paracasei).